The sequence spans 257 residues: Fimbrial assembly protein, serogroup I (257 aa).

This Dichelobacter nodosus (Bacteroides nodosus) protein is Fimbrial assembly protein, serogroup I (fimB).